A 438-amino-acid chain; its full sequence is 3-phosphoshikimate 1-carboxyvinyltransferase (438 aa).

Residues lysine 21, serine 22, and arginine 26 each contribute to the 3-phosphoshikimate site. Lysine 21 is a binding site for phosphoenolpyruvate. The phosphoenolpyruvate site is built by glycine 93 and arginine 121. Residues serine 166, serine 167, glutamine 168, serine 194, aspartate 324, and lysine 351 each coordinate 3-phosphoshikimate. Glutamine 168 serves as a coordination point for phosphoenolpyruvate. Catalysis depends on aspartate 324, which acts as the Proton acceptor. Phosphoenolpyruvate contacts are provided by arginine 355 and arginine 395.

This sequence belongs to the EPSP synthase family. Monomer.

It localises to the cytoplasm. The catalysed reaction is 3-phosphoshikimate + phosphoenolpyruvate = 5-O-(1-carboxyvinyl)-3-phosphoshikimate + phosphate. It participates in metabolic intermediate biosynthesis; chorismate biosynthesis. Functionally, catalyzes the transfer of the enolpyruvyl moiety of phosphoenolpyruvate (PEP) to the 5-hydroxyl of shikimate-3-phosphate (S3P) to produce enolpyruvyl shikimate-3-phosphate and inorganic phosphate. This is 3-phosphoshikimate 1-carboxyvinyltransferase from Methanobrevibacter smithii (strain ATCC 35061 / DSM 861 / OCM 144 / PS).